Consider the following 378-residue polypeptide: Protein RecA (378 aa).

An ATP-binding site is contributed by 79 to 86 (GPESSGKT).

It belongs to the RecA family.

Its subcellular location is the cytoplasm. Can catalyze the hydrolysis of ATP in the presence of single-stranded DNA, the ATP-dependent uptake of single-stranded DNA by duplex DNA, and the ATP-dependent hybridization of homologous single-stranded DNAs. It interacts with LexA causing its activation and leading to its autocatalytic cleavage. This chain is Protein RecA, found in Streptococcus pyogenes serotype M28 (strain MGAS6180).